The primary structure comprises 447 residues: Peptide chain release factor 1, mitochondrial (447 aa).

A mitochondrion-targeting transit peptide spans Met1 to Tyr63. The GGQ domain stretch occupies residues Pro299–Ile363. Residues Gly313–Gln315 carry the GGQ motif. An N5-methylglutamine modification is found at Gln315.

Belongs to the prokaryotic/mitochondrial release factor family. In terms of processing, methylation of glutamine in the GGQ triplet by HEMK1 is conserved from bacteria to mammals.

Its subcellular location is the mitochondrion. Its function is as follows. Mitochondrial peptide chain release factor that directs the termination of translation in response to the peptide chain non-canonical stop codons AGG and AGA. Non-canonical termination codons AGG and AGA are found at the end of MT-CO1/COX1 and MT-ND6/ND6 open reading frames, respectively. Recognizes non-canonical stop codons via a network of interactions between the codon, MTRF1 and the ribosomal RNA (rRNA): in contrast to other translation release factors, which identify the codon in the A-site via direct interactions of amino acid side chains with the bases, MTRF1 repositions the first 2 bases of the stop codon to use an intricate network of interactions that includes residues of the release factor, the rRNA of the small ribosomal subunit, as well as neighboring bases of the mRNA. This is Peptide chain release factor 1, mitochondrial (MTRF1) from Bos taurus (Bovine).